A 228-amino-acid chain; its full sequence is Archaeal flagellar ATP-binding protein FlaH (228 aa).

ATP-binding residues include Gly30, Thr31, Lys33, Ser34, Val35, Glu57, and Lys191. Residue Ser34 participates in Mg(2+) binding. A Mg(2+)-binding site is contributed by Glu57.

Belongs to the FlaH family. In terms of assembly, the S.acidocaldarius archaellum assembly machinery and its filament consist of seven proteins (FlaB, FlaF, FlaG, FlaH, FlaI, FlaJ and FlaX). Interacts directly with the FlaX ring and the motor ATPase FlaI. Monomers, which can probably form homohexamers upon binding to ATP. In vitro, FlaH assembles as a second ring inside the FlaX ring.

It is found in the archaeal flagellum. The protein resides in the cytoplasm. In terms of biological role, component of the archaellum. FlaX, FlaH and FlaI form the core cytoplasmic motor complex of the crenarchaeal archaellum. FlaH binds ATP with high affinity but lacks detectable in vitro ATPase activity. ATP binding is essential for interaction with FlaI and for archaellum assembly. The polypeptide is Archaeal flagellar ATP-binding protein FlaH (Sulfolobus acidocaldarius (strain ATCC 33909 / DSM 639 / JCM 8929 / NBRC 15157 / NCIMB 11770)).